The primary structure comprises 602 residues: DNA mismatch repair protein MutL (602 aa).

Belongs to the DNA mismatch repair MutL/HexB family.

Functionally, this protein is involved in the repair of mismatches in DNA. It is required for dam-dependent methyl-directed DNA mismatch repair. May act as a 'molecular matchmaker', a protein that promotes the formation of a stable complex between two or more DNA-binding proteins in an ATP-dependent manner without itself being part of a final effector complex. This chain is DNA mismatch repair protein MutL, found in Baumannia cicadellinicola subsp. Homalodisca coagulata.